The primary structure comprises 307 residues: Farnesol kinase, chloroplastic (307 aa).

The N-terminal 65 residues, 1 to 65 (MATTSTTTKL…TKIRKSSLAA (65 aa)), are a transit peptide targeting the chloroplast. 7 consecutive transmembrane segments (helical) span residues 77–97 (VCAF…WGEI), 116–136 (IGLV…GALF), 137–157 (ASLV…GVYH), 177–194 (GPLY…YYWK), 197–217 (PIAI…DIVG), 237–257 (IGMA…FASF), and 265–285 (GMIL…SLPI).

This sequence belongs to the polyprenol kinase family.

Its subcellular location is the plastid. The protein resides in the chloroplast membrane. The catalysed reaction is (2E,6E)-farnesol + CTP = (2E,6E)-farnesyl phosphate + CDP + H(+). It catalyses the reaction (2E,6E)-farnesol + ATP = (2E,6E)-farnesyl phosphate + ADP + H(+). It carries out the reaction (2E)-geraniol + ATP = (2E)-geranyl phosphate + ADP + H(+). The enzyme catalyses (2E,6E,10E)-geranylgeraniol + ATP = (2E,6E,10E)-geranylgeranyl phosphate + ADP + H(+). Functionally, kinase involved in negative regulation of abscisic acid (ABA) signaling. Substrate preference is farnesol &gt; geraniol &gt; geranylgeraniol, but has no activity with farnesyl phosphate. Can use CTP &gt; ATP &gt; GTP = UTP as phosphoryl donor. The sequence is that of Farnesol kinase, chloroplastic from Arabidopsis thaliana (Mouse-ear cress).